Reading from the N-terminus, the 197-residue chain is Thymidine kinase (197 aa).

ATP is bound by residues 9–16 (SAMDAGKT) and 87–90 (DEIH). Residue Glu88 is the Proton acceptor of the active site. The Zn(2+) site is built by Cys145, Cys147, Cys187, and His190.

This sequence belongs to the thymidine kinase family. Homotetramer.

The protein localises to the cytoplasm. It catalyses the reaction thymidine + ATP = dTMP + ADP + H(+). The chain is Thymidine kinase from Francisella tularensis subsp. holarctica (strain LVS).